Here is a 178-residue protein sequence, read N- to C-terminus: ATP-dependent protease subunit HslV (178 aa).

The active site involves Thr-5. Na(+) contacts are provided by Ser-161, Cys-164, and Thr-167.

The protein belongs to the peptidase T1B family. HslV subfamily. A double ring-shaped homohexamer of HslV is capped on each side by a ring-shaped HslU homohexamer. The assembly of the HslU/HslV complex is dependent on binding of ATP.

The protein localises to the cytoplasm. It carries out the reaction ATP-dependent cleavage of peptide bonds with broad specificity.. With respect to regulation, allosterically activated by HslU binding. In terms of biological role, protease subunit of a proteasome-like degradation complex believed to be a general protein degrading machinery. This Syntrophomonas wolfei subsp. wolfei (strain DSM 2245B / Goettingen) protein is ATP-dependent protease subunit HslV.